Reading from the N-terminus, the 404-residue chain is Cysteine desulfurase IscS (404 aa).

Pyridoxal 5'-phosphate is bound by residues Ala75–Thr76, Asn155, Gln183, and Ser203–His205. Position 206 is an N6-(pyridoxal phosphate)lysine (Lys206). Residue Thr243 participates in pyridoxal 5'-phosphate binding. Cys328 acts as the Cysteine persulfide intermediate in catalysis. A [2Fe-2S] cluster-binding site is contributed by Cys328.

Belongs to the class-V pyridoxal-phosphate-dependent aminotransferase family. NifS/IscS subfamily. Homodimer. Forms a heterotetramer with IscU, interacts with other sulfur acceptors. Requires pyridoxal 5'-phosphate as cofactor.

It localises to the cytoplasm. It carries out the reaction (sulfur carrier)-H + L-cysteine = (sulfur carrier)-SH + L-alanine. The protein operates within cofactor biosynthesis; iron-sulfur cluster biosynthesis. In terms of biological role, master enzyme that delivers sulfur to a number of partners involved in Fe-S cluster assembly, tRNA modification or cofactor biosynthesis. Catalyzes the removal of elemental sulfur atoms from cysteine to produce alanine. Functions as a sulfur delivery protein for Fe-S cluster synthesis onto IscU, an Fe-S scaffold assembly protein, as well as other S acceptor proteins. The protein is Cysteine desulfurase IscS of Pseudomonas aeruginosa (strain UCBPP-PA14).